Reading from the N-terminus, the 1308-residue chain is Chromosome partition protein Smc (1308 aa).

ATP is bound at residue 34–41 (PNGCGKSN). Residues 115–181 (AAREASMEEV…VAEGQPSDAQ (67 aa)) form a disordered region. The span at 137-169 (TEAEATEQQAAPSEGAAPTTEATAPSTENEAAP) shows a compositional bias: low complexity. A coiled-coil region spans residues 278-600 (ITKYKTKKRL…DTLRAEYATL (323 aa)). Positions 637 to 757 (AGVLADFLEV…VPDPAIGREL (121 aa)) constitute an SMC hinge domain. Coiled-coil stretches lie at residues 791–1046 (SLKR…ELHA) and 1110–1148 (MALE…EIDQ).

Belongs to the SMC family. In terms of assembly, homodimer.

It is found in the cytoplasm. In terms of biological role, required for chromosome condensation and partitioning. This Koribacter versatilis (strain Ellin345) protein is Chromosome partition protein Smc.